A 173-amino-acid polypeptide reads, in one-letter code: Probable transcription termination protein NusA (173 aa).

The region spanning D31–N97 is the KH domain. A compositionally biased stretch (basic and acidic residues) spans A147–E162. The interval A147 to Q173 is disordered. Residues S163 to Q173 show a composition bias toward polar residues.

The protein belongs to the NusA family.

The protein resides in the cytoplasm. In terms of biological role, participates in transcription termination. In Methanococcus vannielii (strain ATCC 35089 / DSM 1224 / JCM 13029 / OCM 148 / SB), this protein is Probable transcription termination protein NusA.